The following is an 86-amino-acid chain: MPKSEIHPKWYPDAKVICNGEVVMTTGSTQPELHVDVWSGNHPFFTGTQKILDTEGRVDRFMKKYGMGSANSATSKEQKEEKDSNK.

The tract at residues 65–86 is disordered; the sequence is YGMGSANSATSKEQKEEKDSNK. Residues 76–86 show a composition bias toward basic and acidic residues; the sequence is KEQKEEKDSNK.

The protein belongs to the bacterial ribosomal protein bL31 family. Type A subfamily. As to quaternary structure, part of the 50S ribosomal subunit.

Functionally, binds the 23S rRNA. This Prochlorococcus marinus (strain MIT 9312) protein is Large ribosomal subunit protein bL31.